Reading from the N-terminus, the 302-residue chain is Sulfate adenylyltransferase subunit 2 (302 aa).

This sequence belongs to the PAPS reductase family. CysD subfamily. As to quaternary structure, heterodimer composed of CysD, the smaller subunit, and CysN.

The catalysed reaction is sulfate + ATP + H(+) = adenosine 5'-phosphosulfate + diphosphate. It functions in the pathway sulfur metabolism; hydrogen sulfide biosynthesis; sulfite from sulfate: step 1/3. In terms of biological role, with CysN forms the ATP sulfurylase (ATPS) that catalyzes the adenylation of sulfate producing adenosine 5'-phosphosulfate (APS) and diphosphate, the first enzymatic step in sulfur assimilation pathway. APS synthesis involves the formation of a high-energy phosphoric-sulfuric acid anhydride bond driven by GTP hydrolysis by CysN coupled to ATP hydrolysis by CysD. This chain is Sulfate adenylyltransferase subunit 2, found in Pectobacterium carotovorum subsp. carotovorum (strain PC1).